The sequence spans 906 residues: Ankyrin repeat and MYND domain-containing protein 1 (906 aa).

MORN repeat units lie at residues 16–38 (YHGQ…DGSS), 39–59 (FTGT…TKTM), and 61–83 (FQGL…DGSQ). An ANK 1 repeat occupies 282–311 (KGYTVLAAAAMHSHLDIVNLLLDFGADVNK). Residues 391–400 (SMQTPESSNM) are compositionally biased toward polar residues. The tract at residues 391–411 (SMQTPESSNMLHKEEVSPVKT) is disordered. 6 ANK repeats span residues 479 to 508 (VRKM…DPNL), 511 to 540 (VPMQ…QTDI), 547 to 579 (QSLT…NVDA), 623 to 657 (GGRT…NPNV), 660 to 689 (SGHS…DPNL), and 701 to 732 (VVCD…DVLN). Zn(2+) contacts are provided by cysteine 845, cysteine 848, cysteine 859, cysteine 862, cysteine 868, cysteine 872, histidine 881, and cysteine 885. The segment at 845–885 (CYQCGRSIGVRLSPCPRCYGILTCSKYCKTKAWIEFHKKDC) adopts an MYND-type zinc-finger fold.

The chain is Ankyrin repeat and MYND domain-containing protein 1 (Ankmy1) from Mus musculus (Mouse).